A 456-amino-acid polypeptide reads, in one-letter code: Adenylosuccinate synthetase (456 aa).

GTP contacts are provided by residues 11–17 and 39–41; these read GDEGKGG and GHT. The active-site Proton acceptor is the Asp-12. Residues Asp-12 and Gly-39 each contribute to the Mg(2+) site. Residues 12 to 15, 37 to 40, Thr-127, Arg-141, Gln-232, Thr-247, and Arg-328 each bind IMP; these read DEGK and NAGH. Catalysis depends on His-40, which acts as the Proton donor. 324-330 is a substrate binding site; that stretch reads TVTGRPR. GTP-binding positions include Arg-330, 356–358, and 441–443; these read HLD and GVG.

This sequence belongs to the adenylosuccinate synthetase family. Homodimer. Mg(2+) is required as a cofactor.

The protein resides in the cytoplasm. The catalysed reaction is IMP + L-aspartate + GTP = N(6)-(1,2-dicarboxyethyl)-AMP + GDP + phosphate + 2 H(+). Its pathway is purine metabolism; AMP biosynthesis via de novo pathway; AMP from IMP: step 1/2. Functionally, plays an important role in the de novo pathway of purine nucleotide biosynthesis. Catalyzes the first committed step in the biosynthesis of AMP from IMP. This Natronomonas pharaonis (strain ATCC 35678 / DSM 2160 / CIP 103997 / JCM 8858 / NBRC 14720 / NCIMB 2260 / Gabara) (Halobacterium pharaonis) protein is Adenylosuccinate synthetase.